A 188-amino-acid chain; its full sequence is MEQYRGTTILSVRRGAEVALGGDGQVTLGNIVIKSTARKIRRLYQEKVLAGFAGGTADAFTLFERFEAKLDKHSGHLLRSAVELAKDWRTDRMLRRLEAMLAVADREHSLIITGNGDVLEPELGIAAIGSGGAFAQSAARALLENTDLAPLEIVKKSLTIAGDICIYSNQNHVIEVLGDRGQDSGVRE.

The active site involves T7. Positions 162, 165, and 168 each coordinate Na(+).

This sequence belongs to the peptidase T1B family. HslV subfamily. As to quaternary structure, a double ring-shaped homohexamer of HslV is capped on each side by a ring-shaped HslU homohexamer. The assembly of the HslU/HslV complex is dependent on binding of ATP.

It is found in the cytoplasm. The catalysed reaction is ATP-dependent cleavage of peptide bonds with broad specificity.. With respect to regulation, allosterically activated by HslU binding. Functionally, protease subunit of a proteasome-like degradation complex believed to be a general protein degrading machinery. The protein is ATP-dependent protease subunit HslV of Thiobacillus denitrificans (strain ATCC 25259 / T1).